Consider the following 293-residue polypeptide: Nucleotide-binding protein Csac_1160 (293 aa).

11-18 (GMSGAGKS) serves as a coordination point for ATP. Residue 62 to 65 (DIRG) coordinates GTP.

This sequence belongs to the RapZ-like family.

Its function is as follows. Displays ATPase and GTPase activities. This is Nucleotide-binding protein Csac_1160 from Caldicellulosiruptor saccharolyticus (strain ATCC 43494 / DSM 8903 / Tp8T 6331).